The following is a 296-amino-acid chain: uncharacterized protein (296 aa).

The chain crosses the membrane as a helical span at residues 7 to 26; it reads CFSLVCALGASTYLLWRGWL.

Its subcellular location is the membrane. This is an uncharacterized protein from Treponema pallidum (strain Nichols).